An 881-amino-acid chain; its full sequence is Leucine--tRNA ligase (881 aa).

Positions 48–58 (PYPSGKLHMGH) match the 'HIGH' region motif. The 'KMSKS' region signature appears at 638–642 (KMSKS). Lys-641 is a binding site for ATP.

Belongs to the class-I aminoacyl-tRNA synthetase family.

It localises to the cytoplasm. It catalyses the reaction tRNA(Leu) + L-leucine + ATP = L-leucyl-tRNA(Leu) + AMP + diphosphate. The chain is Leucine--tRNA ligase from Herminiimonas arsenicoxydans.